The sequence spans 103 residues: Co-chaperonin GroES (103 aa).

The protein belongs to the GroES chaperonin family. In terms of assembly, heptamer of 7 subunits arranged in a ring. Interacts with the chaperonin GroEL.

The protein resides in the cytoplasm. Its function is as follows. Together with the chaperonin GroEL, plays an essential role in assisting protein folding. The GroEL-GroES system forms a nano-cage that allows encapsulation of the non-native substrate proteins and provides a physical environment optimized to promote and accelerate protein folding. GroES binds to the apical surface of the GroEL ring, thereby capping the opening of the GroEL channel. The sequence is that of Co-chaperonin GroES from Dinoroseobacter shibae (strain DSM 16493 / NCIMB 14021 / DFL 12).